The sequence spans 182 residues: MTVQVAVALTKKTQQEQPMINERIHFPRVRVVDTDGSQLGIMSSQEAIAIAREKELDLVLVSDKADPPVCKIIDYGKFRFEQEKKAREARKKQHTSDVKEVKMRYKIEEHDYNVCINRAERFLKAGDKVKATVTFRGREIQHSHLAEELLNRMANDLQAVAEVQQAPKQEGRNMIMFLAPKR.

It belongs to the IF-3 family. In terms of assembly, monomer.

Its subcellular location is the cytoplasm. IF-3 binds to the 30S ribosomal subunit and shifts the equilibrium between 70S ribosomes and their 50S and 30S subunits in favor of the free subunits, thus enhancing the availability of 30S subunits on which protein synthesis initiation begins. This chain is Translation initiation factor IF-3, found in Thermosynechococcus vestitus (strain NIES-2133 / IAM M-273 / BP-1).